Here is a 146-residue protein sequence, read N- to C-terminus: Hemoglobin subunit beta (146 aa).

An N-acetylvaline modification is found at Val1. Residues 2–146 (HLTPEEKVAV…VANALAHKYH (145 aa)) form the Globin domain. Thr12 bears the Phosphothreonine mark. Ser44 is subject to Phosphoserine. Lys59 bears the N6-acetyllysine mark. His63 serves as a coordination point for heme b. Position 82 is an N6-acetyllysine (Lys82). Residue His92 coordinates heme b. At Cys93 the chain carries S-nitrosocysteine. Lys144 is modified (N6-acetyllysine).

This sequence belongs to the globin family. In terms of assembly, heterotetramer of two alpha chains and two beta chains. Red blood cells.

In terms of biological role, involved in oxygen transport from the lung to the various peripheral tissues. The sequence is that of Hemoglobin subunit beta (HBB) from Cercocebus atys (Sooty mangabey).